A 650-amino-acid polypeptide reads, in one-letter code: Cytosolic Fe-S cluster assembly factor NAR1 (650 aa).

The [4Fe-4S] cluster site is built by cysteine 22, cysteine 81, cysteine 84, cysteine 87, cysteine 215, cysteine 270, cysteine 480, and cysteine 484.

This sequence belongs to the NARF family.

Component of the cytosolic Fe/S protein assembly machinery. Required for maturation of extramitochondrial Fe/S proteins. May play a role in the transfer of pre-assembled Fe/S clusters to target apoproteins. In Cryptococcus neoformans var. neoformans serotype D (strain JEC21 / ATCC MYA-565) (Filobasidiella neoformans), this protein is Cytosolic Fe-S cluster assembly factor NAR1 (NAR1).